A 244-amino-acid chain; its full sequence is MGQKINPIGFRLGINRTWDSRWFADNAEYGQLLHEDLKMRKFVMSELKQAGISKVVIERPHKKCRVTIHSARPGLIIGRKGADIDKLRKKLSDMTNSETHLNIVEVRKPEVDATLVAQSIAQQLERRVAFRRAMKRAVQSAMRLGAEGIKITCAGRLGGAEIARTEWYREGRVPLHTLRADIDYGTAEAETAFGICGIKVWIFKGEILEHDPMASERRALEGDAQGPASRERDRGDRRRERDNA.

Positions 39-107 (MRKFVMSELK…ETHLNIVEVR (69 aa)) constitute a KH type-2 domain. The segment at 214–244 (ASERRALEGDAQGPASRERDRGDRRRERDNA) is disordered. Residues 229 to 244 (SRERDRGDRRRERDNA) are compositionally biased toward basic and acidic residues.

The protein belongs to the universal ribosomal protein uS3 family. In terms of assembly, part of the 30S ribosomal subunit. Forms a tight complex with proteins S10 and S14.

Functionally, binds the lower part of the 30S subunit head. Binds mRNA in the 70S ribosome, positioning it for translation. This chain is Small ribosomal subunit protein uS3, found in Rhizobium etli (strain CIAT 652).